The following is a 35-amino-acid chain: Alpha-amanitin proprotein 1 (35 aa).

Residues 1–10 constitute a propeptide that is removed on maturation; that stretch reads MFDTNATRLP. Ile-11 bears the (3R,4R)-4,5-dihydroxyisoleucine; in form alpha-amanitin mark. Ile-11 carries the post-translational modification (3R,4S)-4-hydroxyisoleucine; in form gamma-amanitin. The cyclopeptide (Ile-Pro) cross-link spans 11 to 18; that stretch reads IWGIGCNP. The 2'-cysteinyl-6'-hydroxytryptophan sulfoxide (Trp-Cys) cross-link spans 12 to 16; that stretch reads WGIGC. Residue Pro-18 is modified to 4-hydroxyproline. Positions 19-35 are excised as a propeptide; sequence WTAEHVDQTLASGNDIC.

The protein belongs to the MSDIN fungal toxin family. Post-translationally, processed by the macrocyclase-peptidase enzyme POPB to yield a toxic bicyclic octapeptide. POPB first removes 10 residues from the N-terminus. Conformational trapping of the remaining peptide forces the enzyme to release this intermediate rather than proceed to macrocyclization. The enzyme rebinds the remaining peptide in a different conformation and catalyzes macrocyclization of the N-terminal 8 residues.

In terms of biological role, major toxin belonging to the bicyclic octapeptides amatoxins that acts by binding non-competitively to RNA polymerase II and greatly slowing the elongation of transcripts from target promoters. In Galerina marginata (strain CBS 339.88), this protein is Alpha-amanitin proprotein 1.